Consider the following 382-residue polypeptide: 6-hydroxynicotinate 3-monooxygenase (382 aa).

The first 25 residues, 1–25 (MRGRQKIAIVGAGLGGAAAATLLQQ), serve as a signal peptide directing secretion. Residues G15, 34 to 35 (EQ), H47, R108, and L130 contribute to the FAD site. The Proton acceptor role is filled by H47. Y215 functions as the Proton acceptor in the catalytic mechanism. Residues D294 and 307–308 (AC) each bind FAD.

The protein belongs to the 6-hydroxynicotinate 3-monooxygenase family. As to quaternary structure, monomer. FAD serves as cofactor.

It catalyses the reaction 6-hydroxynicotinate + NADH + O2 + 2 H(+) = 2,5-dihydroxypyridine + CO2 + NAD(+) + H2O. It functions in the pathway cofactor degradation; nicotinate degradation. Its function is as follows. Flavin-dependent monooxygenase (FMO) that catalyzes the decarboxylative hydroxylation of 6-hydroxynicotinic acid (6-HNA) to 2,5-dihydroxypyridine (2,5-DHP) with concomitant oxidation of NADH, a step in the aerobic nicotinate degradation pathway. The protein is 6-hydroxynicotinate 3-monooxygenase of Pseudomonas putida (strain ATCC 47054 / DSM 6125 / CFBP 8728 / NCIMB 11950 / KT2440).